Here is a 116-residue protein sequence, read N- to C-terminus: Iron-sulfur cluster insertion protein ErpA (116 aa).

Iron-sulfur cluster-binding residues include cysteine 44, cysteine 108, and cysteine 110.

The protein belongs to the HesB/IscA family. Homodimer. Iron-sulfur cluster serves as cofactor.

Functionally, required for insertion of 4Fe-4S clusters for at least IspG. The chain is Iron-sulfur cluster insertion protein ErpA from Pseudomonas entomophila (strain L48).